An 87-amino-acid chain; its full sequence is Small ribosomal subunit protein bS20 (87 aa).

Positions 1-11 are enriched in basic residues; sequence MANHKSALKRI. The interval 1 to 23 is disordered; the sequence is MANHKSALKRIKQTEKRTERNRH.

Belongs to the bacterial ribosomal protein bS20 family.

Binds directly to 16S ribosomal RNA. This is Small ribosomal subunit protein bS20 from Geotalea uraniireducens (strain Rf4) (Geobacter uraniireducens).